Here is a 182-residue protein sequence, read N- to C-terminus: Isopentenyl-diphosphate Delta-isomerase (182 aa).

Residues His-25 and His-32 each coordinate Mn(2+). Residues 30-164 (RLHLAFSSWL…PWAFSPWMVM (135 aa)) form the Nudix hydrolase domain. Cys-67 is an active-site residue. Cys-67 provides a ligand contact to Mg(2+). His-69 provides a ligand contact to Mn(2+). Glu-87 contributes to the Mg(2+) binding site. Residues Glu-114 and Glu-116 each coordinate Mn(2+). The active site involves Glu-116.

It belongs to the IPP isomerase type 1 family. Homodimer. Mg(2+) is required as a cofactor. The cofactor is Mn(2+).

It is found in the cytoplasm. It carries out the reaction isopentenyl diphosphate = dimethylallyl diphosphate. The protein operates within isoprenoid biosynthesis; dimethylallyl diphosphate biosynthesis; dimethylallyl diphosphate from isopentenyl diphosphate: step 1/1. Functionally, catalyzes the 1,3-allylic rearrangement of the homoallylic substrate isopentenyl (IPP) to its highly electrophilic allylic isomer, dimethylallyl diphosphate (DMAPP). The sequence is that of Isopentenyl-diphosphate Delta-isomerase from Shigella dysenteriae serotype 1 (strain Sd197).